The chain runs to 600 residues: Methylenetetrahydrofolate reductase 2 (600 aa).

The Proton donor/acceptor role is filled by Glu-22. NAD(+) is bound by residues 22-27 and 54-55; these read EYFVPK and TW. FAD contacts are provided by residues 54–55, His-84, 114–116, 133–134, Tyr-156, Asp-171, and Lys-178; these read TW, RGD, and YA. Residue Asp-116 coordinates substrate. Gln-189 and Tyr-282 together coordinate substrate.

This sequence belongs to the methylenetetrahydrofolate reductase family. The cofactor is FAD.

It catalyses the reaction (6S)-5-methyl-5,6,7,8-tetrahydrofolate + NADP(+) = (6R)-5,10-methylene-5,6,7,8-tetrahydrofolate + NADPH + H(+). It participates in one-carbon metabolism; tetrahydrofolate interconversion. This is Methylenetetrahydrofolate reductase 2 (MET13) from Saccharomyces cerevisiae (strain ATCC 204508 / S288c) (Baker's yeast).